The chain runs to 91 residues: Cytochrome c-554(547) (91 aa).

The heme c site is built by Cys-15, Cys-18, His-19, and Met-64.

Monomer. Post-translationally, binds 1 heme c group covalently per subunit.

The polypeptide is Cytochrome c-554(547) (Halothiobacillus neapolitanus (Thiobacillus neapolitanus)).